Consider the following 456-residue polypeptide: Signal recognition particle receptor FtsY (456 aa).

The span at 1–26 (MFDGLKKKLNRFRNDVEETAEEKAEA) shows a compositional bias: basic and acidic residues. The interval 1–163 (MFDGLKKKLN…DEDDSSGPGR (163 aa)) is disordered. Positions 27-39 (AADEAESDADAEA) are enriched in acidic residues. Low complexity predominate over residues 40 to 62 (ESAPADTDNAAVEPEASEPAAAD). Acidic residues predominate over residues 63 to 81 (PDADAVGDADAGSEADAVD). Positions 82–97 (AADAPADAESSSAAVE) are enriched in low complexity. Positions 112–134 (PDSEVDAGADTGDEPSGEPTADE) are enriched in acidic residues. Residues 265 to 272 (GINGVGKT), 347 to 351 (DTAGR), and 405 to 408 (TKAD) contribute to the GTP site.

The protein belongs to the GTP-binding SRP family. FtsY subfamily. In terms of assembly, part of the signal recognition particle protein translocation system, which is composed of SRP and FtsY.

The protein resides in the cell membrane. It is found in the cytoplasm. The enzyme catalyses GTP + H2O = GDP + phosphate + H(+). Functionally, involved in targeting and insertion of nascent membrane proteins into the cytoplasmic membrane. Acts as a receptor for the complex formed by the signal recognition particle (SRP) and the ribosome-nascent chain (RNC). The sequence is that of Signal recognition particle receptor FtsY from Haloferax volcanii (strain ATCC 29605 / DSM 3757 / JCM 8879 / NBRC 14742 / NCIMB 2012 / VKM B-1768 / DS2) (Halobacterium volcanii).